A 453-amino-acid chain; its full sequence is Bifunctional protein GlmU (453 aa).

Residues 1–226 (MSLNVVILAA…AMEVEGANNR (226 aa)) form a pyrophosphorylase region. UDP-N-acetyl-alpha-D-glucosamine is bound by residues 8–11 (LAAG), K22, Q73, 78–79 (GT), 100–102 (YGD), G137, E151, N166, and N224. D102 serves as a coordination point for Mg(2+). A Mg(2+)-binding site is contributed by N224. The tract at residues 227–247 (VQLAQLERSYQKMQAERLMIA) is linker. Residues 248–453 (GATLIDPARF…QNWARPVKKK (206 aa)) form an N-acetyltransferase region. Positions 330 and 348 each coordinate UDP-N-acetyl-alpha-D-glucosamine. H360 acts as the Proton acceptor in catalysis. UDP-N-acetyl-alpha-D-glucosamine is bound by residues Y363 and N374. Acetyl-CoA contacts are provided by residues A377, 383 to 384 (NY), S402, A420, and R437.

It in the N-terminal section; belongs to the N-acetylglucosamine-1-phosphate uridyltransferase family. The protein in the C-terminal section; belongs to the transferase hexapeptide repeat family. As to quaternary structure, homotrimer. It depends on Mg(2+) as a cofactor.

It is found in the cytoplasm. It catalyses the reaction alpha-D-glucosamine 1-phosphate + acetyl-CoA = N-acetyl-alpha-D-glucosamine 1-phosphate + CoA + H(+). The catalysed reaction is N-acetyl-alpha-D-glucosamine 1-phosphate + UTP + H(+) = UDP-N-acetyl-alpha-D-glucosamine + diphosphate. It participates in nucleotide-sugar biosynthesis; UDP-N-acetyl-alpha-D-glucosamine biosynthesis; N-acetyl-alpha-D-glucosamine 1-phosphate from alpha-D-glucosamine 6-phosphate (route II): step 2/2. The protein operates within nucleotide-sugar biosynthesis; UDP-N-acetyl-alpha-D-glucosamine biosynthesis; UDP-N-acetyl-alpha-D-glucosamine from N-acetyl-alpha-D-glucosamine 1-phosphate: step 1/1. It functions in the pathway bacterial outer membrane biogenesis; LPS lipid A biosynthesis. Catalyzes the last two sequential reactions in the de novo biosynthetic pathway for UDP-N-acetylglucosamine (UDP-GlcNAc). The C-terminal domain catalyzes the transfer of acetyl group from acetyl coenzyme A to glucosamine-1-phosphate (GlcN-1-P) to produce N-acetylglucosamine-1-phosphate (GlcNAc-1-P), which is converted into UDP-GlcNAc by the transfer of uridine 5-monophosphate (from uridine 5-triphosphate), a reaction catalyzed by the N-terminal domain. The polypeptide is Bifunctional protein GlmU (Aeromonas hydrophila subsp. hydrophila (strain ATCC 7966 / DSM 30187 / BCRC 13018 / CCUG 14551 / JCM 1027 / KCTC 2358 / NCIMB 9240 / NCTC 8049)).